The sequence spans 974 residues: Translation initiation factor IF-2 (974 aa).

3 disordered regions span residues 67-86, 101-133, and 146-385; these read TRKH…ARTI, DVAE…RREA, and RQER…TFQA. Residues 105–114 are compositionally biased toward low complexity; the sequence is GAEQGQAQVA. Basic and acidic residues-rich tracts occupy residues 121 to 133 and 146 to 181; these read ELKR…RREA and RQER…KRAA. Positions 182-197 are enriched in low complexity; the sequence is AEAAAAQQAAAQQAAE. Positions 210–261 are enriched in basic and acidic residues; sequence EEARAAAERAAQREAAKKAEDAAREAADKARAEQEEIRKRREAAEAEARAIR. The segment covering 313–329 has biased composition (low complexity); it reads PAGATPATTQAPAAGAG. Over residues 358–371 the composition is skewed to gly residues; it reads SSGGVDRGWRGGPK. Positions 474–643 constitute a tr-type G domain; sequence PRPPVVTVMG…LLQAEVLELK (170 aa). The segment at 483-490 is G1; it reads GHVDHGKT. 483–490 is a binding site for GTP; that stretch reads GHVDHGKT. The interval 508–512 is G2; that stretch reads GITQH. Residues 529-532 form a G3 region; sequence DTPG. GTP is bound by residues 529 to 533 and 583 to 586; these read DTPGH and NKID. The interval 583 to 586 is G4; it reads NKID. The G5 stretch occupies residues 619–621; sequence SAK.

The protein belongs to the TRAFAC class translation factor GTPase superfamily. Classic translation factor GTPase family. IF-2 subfamily.

Its subcellular location is the cytoplasm. Its function is as follows. One of the essential components for the initiation of protein synthesis. Protects formylmethionyl-tRNA from spontaneous hydrolysis and promotes its binding to the 30S ribosomal subunits. Also involved in the hydrolysis of GTP during the formation of the 70S ribosomal complex. This is Translation initiation factor IF-2 from Burkholderia vietnamiensis (strain G4 / LMG 22486) (Burkholderia cepacia (strain R1808)).